The sequence spans 380 residues: Chaperone protein DnaJ (380 aa).

A disordered region spans residues 1–48 (MAKKDYYDTLGVPKNASDDDIKKAYRKLAMKHHPDRNQGDKSKVSEEK). One can recognise a J domain in the interval 5–72 (DYYDTLGVPK…NKRMAYDQYG (68 aa)). Residues 24-34 (AYRKLAMKHHP) show a composition bias toward basic residues. A compositionally biased stretch (basic and acidic residues) spans 35–48 (DRNQGDKSKVSEEK). The CR-type zinc-finger motif lies at 139–217 (GKEAQIRIPS…CHGVGKTKNN (79 aa)). Zn(2+) contacts are provided by C152, C155, C169, C172, C191, C194, C205, and C208. 4 CXXCXGXG motif repeats span residues 152–159 (CNTCHGSG), 169–176 (CTTCHGHG), 191–198 (CPQCKGTG), and 205–212 (CVACHGVG). Residues 357–380 (KKGGARHSPSEEGWADKLKSFFSA) form a disordered region. A compositionally biased stretch (basic and acidic residues) spans 364-380 (SPSEEGWADKLKSFFSA).

Belongs to the DnaJ family. In terms of assembly, homodimer. Zn(2+) is required as a cofactor.

The protein resides in the cytoplasm. Participates actively in the response to hyperosmotic and heat shock by preventing the aggregation of stress-denatured proteins and by disaggregating proteins, also in an autonomous, DnaK-independent fashion. Unfolded proteins bind initially to DnaJ; upon interaction with the DnaJ-bound protein, DnaK hydrolyzes its bound ATP, resulting in the formation of a stable complex. GrpE releases ADP from DnaK; ATP binding to DnaK triggers the release of the substrate protein, thus completing the reaction cycle. Several rounds of ATP-dependent interactions between DnaJ, DnaK and GrpE are required for fully efficient folding. Also involved, together with DnaK and GrpE, in the DNA replication of plasmids through activation of initiation proteins. This chain is Chaperone protein DnaJ, found in Polaromonas sp. (strain JS666 / ATCC BAA-500).